The primary structure comprises 156 residues: Small ribosomal subunit protein uS10m (156 aa).

Belongs to the universal ribosomal protein uS10 family.

The protein localises to the mitochondrion. Ribosomal protein required for normal mitochondrial function and normal larval development. Thought to have a role in insulin/IGF signaling. This Caenorhabditis elegans protein is Small ribosomal subunit protein uS10m (mrps-10).